Reading from the N-terminus, the 233-residue chain is MSVHIGAEKGQIADTVLLPGDPLRAKFIAETYLENVECYNEVRGMYGFTGTYKGKKISVQGTGMGVPSISIYVNELIQSYDVQNLIRVGSCGAIRKDVKVRDVILAMTSSTDSQMNRVAFGSVDFAPCADFELLKNAYDAAKDKGVPVTVGSVFTADQFYNDDSQIEKLAKYGVLGVEMETTALYTLAAKHGRKALSILTVSDHVLTGEETTAEERQTTFHDMIEVALHSVSQ.

His4 contacts a purine D-ribonucleoside. Phosphate contacts are provided by residues Gly20, Arg24, Arg43, and 87-90 (RVGS). A purine D-ribonucleoside-binding positions include 178–180 (EME) and 202–203 (SD). The active-site Proton donor is Asp203.

The protein belongs to the PNP/UDP phosphorylase family. In terms of assembly, homohexamer; trimer of homodimers.

It catalyses the reaction a purine D-ribonucleoside + phosphate = a purine nucleobase + alpha-D-ribose 1-phosphate. The catalysed reaction is a purine 2'-deoxy-D-ribonucleoside + phosphate = a purine nucleobase + 2-deoxy-alpha-D-ribose 1-phosphate. Catalyzes the reversible phosphorolytic breakdown of the N-glycosidic bond in the beta-(deoxy)ribonucleoside molecules, with the formation of the corresponding free purine bases and pentose-1-phosphate. This is Purine nucleoside phosphorylase DeoD-type from Bacillus subtilis (strain 168).